The chain runs to 241 residues: DnaA regulatory inactivator Hda (241 aa).

Belongs to the DnaA family. HdA subfamily. In terms of assembly, the active form seems to be an ADP-bound monomer. Forms the RIDA complex (regulatory inactivation of DnaA) of ATP-DnaA, ADP-Hda and the DNA-loaded beta sliding clamp (dnaN).

In terms of biological role, mediates the interaction of DNA replication initiator protein DnaA with DNA polymerase subunit beta sliding clamp (dnaN). Stimulates hydrolysis of ATP-DnaA to ADP-DnaA, rendering DnaA inactive for reinitiation, a process called regulatory inhibition of DnaA or RIDA. The sequence is that of DnaA regulatory inactivator Hda from Citrobacter koseri (strain ATCC BAA-895 / CDC 4225-83 / SGSC4696).